The following is a 502-amino-acid chain: ATP synthase subunit alpha (502 aa).

Residues 115–134 (IDGQGPINTTKTRPVEQKAT) form a disordered region. Position 169 to 176 (169 to 176 (GDRQTGKT)) interacts with ATP.

It belongs to the ATPase alpha/beta chains family. In terms of assembly, F-type ATPases have 2 components, CF(1) - the catalytic core - and CF(0) - the membrane proton channel. CF(1) has five subunits: alpha(3), beta(3), gamma(1), delta(1), epsilon(1). CF(0) has three main subunits: a(1), b(2) and c(9-12). The alpha and beta chains form an alternating ring which encloses part of the gamma chain. CF(1) is attached to CF(0) by a central stalk formed by the gamma and epsilon chains, while a peripheral stalk is formed by the delta and b chains.

The protein resides in the cell membrane. It catalyses the reaction ATP + H2O + 4 H(+)(in) = ADP + phosphate + 5 H(+)(out). Functionally, produces ATP from ADP in the presence of a proton gradient across the membrane. The alpha chain is a regulatory subunit. This Staphylococcus haemolyticus (strain JCSC1435) protein is ATP synthase subunit alpha.